Reading from the N-terminus, the 62-residue chain is MTILFQLALAALVALSFLMVIGVPVAYASPTNWEQSKSLIFVGSIAWTVLVIAVGVLNFFVI.

The next 2 membrane-spanning stretches (helical) occupy residues 8–28 (ALAA…VAYA) and 41–61 (FVGS…NFFV).

This sequence belongs to the PsbZ family. As to quaternary structure, PSII is composed of 1 copy each of membrane proteins PsbA, PsbB, PsbC, PsbD, PsbE, PsbF, PsbH, PsbI, PsbJ, PsbK, PsbL, PsbM, PsbT, PsbX, PsbY, PsbZ, Psb30/Ycf12, peripheral proteins PsbO, CyanoQ (PsbQ), PsbU, PsbV and a large number of cofactors. It forms dimeric complexes.

The protein resides in the cellular thylakoid membrane. Functionally, may control the interaction of photosystem II (PSII) cores with the light-harvesting antenna, regulates electron flow through the 2 photosystem reaction centers. PSII is a light-driven water plastoquinone oxidoreductase, using light energy to abstract electrons from H(2)O, generating a proton gradient subsequently used for ATP formation. The chain is Photosystem II reaction center protein Z from Picosynechococcus sp. (strain ATCC 27264 / PCC 7002 / PR-6) (Agmenellum quadruplicatum).